Reading from the N-terminus, the 128-residue chain is MPKSFYDAVGGAKTFDAIVSRFYAQVAEDEVLRRVYPEDDLAGAEERLRMFLEQYWGGPRTYSEQRGHPRLRMRHAPFRISLIERDAWLRCMHTAVASIDSETLDDEHRRELLDYLEMAAHSLVNSPF.

Residues 23 to 36 constitute a cross-link (isodityrosine (Tyr-Tyr)); sequence YAQVAEDEVLRRVY. Y36 bears the 3',4'-dihydroxyphenylalanine mark. Residue H75 participates in heme binding.

Belongs to the truncated hemoglobin family. Group II subfamily. In terms of assembly, homododecamer. Heme serves as cofactor. Post-translationally, contains L-DOPA (3',4'-dihydroxyphenylalanine).

This Mycobacterium bovis (strain ATCC BAA-935 / AF2122/97) protein is Group 2 truncated hemoglobin GlbO (glbO).